The primary structure comprises 440 residues: Trigger factor (440 aa).

The PPIase FKBP-type domain occupies 160 to 253 (KDTVIGDALR…VTEVKRLELP (94 aa)).

It belongs to the FKBP-type PPIase family. Tig subfamily.

The protein localises to the cytoplasm. The catalysed reaction is [protein]-peptidylproline (omega=180) = [protein]-peptidylproline (omega=0). In terms of biological role, involved in protein export. Acts as a chaperone by maintaining the newly synthesized protein in an open conformation. Functions as a peptidyl-prolyl cis-trans isomerase. This chain is Trigger factor, found in Chlorobium chlorochromatii (strain CaD3).